The chain runs to 344 residues: Cyanuric acid amidohydrolase (344 aa).

Positions 1-91 (MTVVDIVKRT…ASAFVGTDRP (91 aa)) are RU A. Substrate-binding positions include Arg-51 and 71–72 (SG). An RU B region spans residues 97–232 (ALVAAVGRTA…CHILVLGNSP (136 aa)). Lys-146 is an active-site residue. Substrate contacts are provided by residues Arg-178 and 215 to 216 (SS). Ser-215 serves as the catalytic Nucleophile. The tract at residues 238–344 (LRAVHGVMRD…PVTVVYRVAS (107 aa)) is RU C. Glu-276 lines the Mg(2+) pocket. Substrate contacts are provided by residues Arg-303 and 322–323 (SG). Mg(2+)-binding residues include Ala-325, Gln-328, Gly-329, Pro-330, and Gly-333.

This sequence belongs to the cyclic amide hydrolase (CyAH) family. Homotetramer.

The enzyme catalyses cyanurate + H2O = 1-carboxybiuret + H(+). The protein operates within xenobiotic degradation; atrazine degradation; biuret from cyanurate: step 1/1. Its activity is regulated as follows. Inhibited by barbituric acid. Functionally, responsible for the hydrolysis of cyanuric acid, an intermediate formed during catabolism of s-triazine based compounds in herbicides such as atrazine and polymers such as melamine. Catalyzes the hydrolytic opening of the s-triazine ring of cyanuric acid (2,4,6-trihydroxy-s-triazine) to yield carbon dioxide and carboxybiuret, which spontaneously decarboxylates to biuret. This Pseudonocardia dioxanivorans (strain ATCC 55486 / DSM 44775 / JCM 13855 / CB1190) protein is Cyanuric acid amidohydrolase.